We begin with the raw amino-acid sequence, 198 residues long: 5'-deoxynucleotidase hdd1 (198 aa).

Positions 38–144 constitute an HD domain; that stretch reads IADHMYRMGI…VKDIDKFEMI (107 aa). A divalent metal cation-binding residues include His41, His69, Asp70, Glu73, Asp78, Ile79, and Asp139.

Belongs to the HDDC2 family. As to quaternary structure, homodimer. Mn(2+) is required as a cofactor. Requires Co(2+) as cofactor. It depends on Mg(2+) as a cofactor.

It is found in the cytoplasm. The protein localises to the nucleus. The catalysed reaction is a 2'-deoxyribonucleoside 5'-phosphate + H2O = a 2'-deoxyribonucleoside + phosphate. In terms of biological role, catalyzes the dephosphorylation of the nucleoside 5'-monophosphates deoxyadenosine monophosphate (dAMP), deoxycytidine monophosphate (dCMP), deoxyguanosine monophosphate (dGMP) and deoxythymidine monophosphate (dTMP). The polypeptide is 5'-deoxynucleotidase hdd1 (Schizosaccharomyces pombe (strain 972 / ATCC 24843) (Fission yeast)).